The sequence spans 574 residues: MANAPHGGVLKDLLVRDAPIAAQLRQEADTLPEIVLTERQLCDLELIINGGFSPLQGFMNQTDYNGCLDNMRLADGNLFPMPITLDVDEQQIEALKIQQGARIALRDPRDDNAIAIITVTDVYAVDKVREATAVFGSDDLAHPAITYLHKSVKNFYVGGDVQAVSKPAYYDYVALRYTPAELRQHFAKISWRKVVAFQTRNPMHRAHRELTVRAARQRQANVLIHPVVGMTKPGDVDHYTRVRVYQSLMPRYPNGMATLALLPLAMRMGGPREALWHAIIRKNFGVTHFIVGRDHAGPGKDSSGKDFYGPYDAQTLVTKYTEELGIEMVPFQQMTYIPSTDEYQPVDEVTPGTQTMDISGTELRRRLRTGAAIPDWFSYESVVKTLRESYPPKAKQGFTLFLTGLHNSGKDQIARALQVKLNEQGGRSVSLLLGETVRSELSSELGFSPDDRQKNIQRISFVAAELTRAGAAVIAAPIAPYEKSRATARDIITKTGGAGNFFLIHVATPLEYCEATDRKGNYAKARAGQIKGFTGVDDVYEEPTDADLVVDISRQSVAEITHSIILLLEAQSLI.

Residues 1-170 (MANAPHGGVL…VQAVSKPAYY (170 aa)) form an N-terminal region. A catalytic region spans residues 171-395 (DYVALRYTPA…LRESYPPKAK (225 aa)). A sulfate-binding site is contributed by Gln198. ATP contacts are provided by residues 198–201 (QTRN) and 292–295 (GRDH). Residues Thr199, Arg200, and Asn201 contribute to the active site. Arg200 is a binding site for sulfate. Residue Ala296 coordinates sulfate. Met334 contributes to the ATP binding site. Residues 396 to 574 (QGFTLFLTGL…ILLLEAQSLI (179 aa)) form an allosteric regulation domain; adenylyl-sulfate kinase-like region. Residues 435–438 (ETVR), Arg452, 478–479 (IA), and Lys519 each bind 3'-phosphoadenylyl sulfate.

In the N-terminal section; belongs to the sulfate adenylyltransferase family. This sequence in the C-terminal section; belongs to the APS kinase family. In terms of assembly, homohexamer. Dimer of trimers.

Its subcellular location is the cytoplasm. It catalyses the reaction sulfate + ATP + H(+) = adenosine 5'-phosphosulfate + diphosphate. The protein operates within sulfur metabolism; hydrogen sulfide biosynthesis; sulfite from sulfate: step 1/3. Its activity is regulated as follows. Allosterically inhibited by 3'-phosphoadenosine 5'-phosphosulfate (PAPS). Catalyzes the first intracellular reaction of sulfate assimilation, forming adenosine-5'-phosphosulfate (APS) from inorganic sulfate and ATP. Plays an important role in sulfate activation as a component of the biosynthesis pathway of sulfur-containing amino acids. The protein is Sulfate adenylyltransferase of Mycosarcoma maydis (Corn smut fungus).